A 161-amino-acid polypeptide reads, in one-letter code: Aklanonic acid methyl ester cyclase DauD (161 aa).

Residue Gln106 coordinates substrate. The disordered stretch occupies residues Trp137–Pro161.

Belongs to the polyketide cyclase DnrD family. Homotetramer.

The enzyme catalyses methyl aklanonate = aklaviketone. The protein operates within antibiotic biosynthesis; daunorubicin biosynthesis. It participates in antibiotic biosynthesis; carminomycin biosynthesis. Its pathway is antibiotic biosynthesis; rhodomycin biosynthesis. It functions in the pathway antibiotic biosynthesis; aclacinomycin biosynthesis. Its function is as follows. Involved in the biosynthesis of aklavinone which is an important precursor common to the formation of the clinically significant anthracyclines such as carminomycin, daunorubicin (daunomycin), rhodomycin, aclacinomycin T (aklavin) and aclacinomycin A (aclarubicin). These compounds are aromatic polyketide antibiotics that exhibit high cytotoxicity and are widely applied in the chemotherapy of a variety of cancers. Catalyzes the cyclization of aklanonic acid methyl ester to yield aklaviketone. The chain is Aklanonic acid methyl ester cyclase DauD (dauD) from Streptomyces sp. (strain C5).